We begin with the raw amino-acid sequence, 569 residues long: MRYSRLFGKTQREIPSDAETISHQLLLRSGMIAQLTAGVYSFMPLAWRSIQKIETIIRQEMNKAGCQELAMPVLQPVEIWQQSGREAPFGQTLFHLKDRKDRNLVLGPTHEEVITDLASRYIQSYRDLPQRLYQIQAKFRDEPRPRGGLIRVREFIMKDMYSFDASPEGLDDSYQTMKQAYESVYRRCGLESMVIDADSGAIGGKASHEFMIVAESGEDSIIYCPKCSYAANAEKAVFKKKTLSKETLKDLEEVATPGQKAISDVARFLAVKPENTLKAVFYMADGKFVMAVIRGDLDINEVKLKNLLKCNDLRLAEDGEVKAAGVVAGSASPVGLKNILIVADDSVENGSNFVAGANKDGFHLKNVNCGRDFRADKMADIALAAEGSACPFCDGTFASKRGVEVGHIFKLGTFLSERFGANFTDAEGVSHPIIMGCYGMGVGRLLAAAIEQNHDEKGIIWPMPIAPYQVYICGLFLDNPVVRESAEKIYKELEAKSIEVLFDDRELTAGVKFNDADLLGIPLRLTISPRNLDKGGVEFKLRRNKESELVPLDSIVERVIATIKSESDL.

Belongs to the class-II aminoacyl-tRNA synthetase family. ProS type 1 subfamily. As to quaternary structure, homodimer.

It is found in the cytoplasm. It carries out the reaction tRNA(Pro) + L-proline + ATP = L-prolyl-tRNA(Pro) + AMP + diphosphate. Catalyzes the attachment of proline to tRNA(Pro) in a two-step reaction: proline is first activated by ATP to form Pro-AMP and then transferred to the acceptor end of tRNA(Pro). As ProRS can inadvertently accommodate and process non-cognate amino acids such as alanine and cysteine, to avoid such errors it has two additional distinct editing activities against alanine. One activity is designated as 'pretransfer' editing and involves the tRNA(Pro)-independent hydrolysis of activated Ala-AMP. The other activity is designated 'posttransfer' editing and involves deacylation of mischarged Ala-tRNA(Pro). The misacylated Cys-tRNA(Pro) is not edited by ProRS. This chain is Proline--tRNA ligase, found in Dehalococcoides mccartyi (strain ATCC BAA-2100 / JCM 16839 / KCTC 5957 / BAV1).